The primary structure comprises 156 residues: 3-hydroxyacyl-[acyl-carrier-protein] dehydratase FabZ (156 aa).

The active site involves H57.

Belongs to the thioester dehydratase family. FabZ subfamily.

It is found in the cytoplasm. It catalyses the reaction a (3R)-hydroxyacyl-[ACP] = a (2E)-enoyl-[ACP] + H2O. Involved in unsaturated fatty acids biosynthesis. Catalyzes the dehydration of short chain beta-hydroxyacyl-ACPs and long chain saturated and unsaturated beta-hydroxyacyl-ACPs. In Anaeromyxobacter dehalogenans (strain 2CP-1 / ATCC BAA-258), this protein is 3-hydroxyacyl-[acyl-carrier-protein] dehydratase FabZ.